A 935-amino-acid polypeptide reads, in one-letter code: Inter-alpha-trypsin inhibitor heavy chain H2 (935 aa).

An N-terminal signal peptide occupies residues 1 to 18 (MKGLTCFLLCFLLSEAQG). The propeptide occupies 19 to 53 (FEIPTNGLSEFAEYGDLAELALGKFHVVPGNRRSQ). The VIT domain occupies 45 to 174 (VVPGNRRSQE…KVQFELHYQE (130 aa)). N-linked (GlcNAc...) asparagine glycosylation is present at Asn107. A 4-carboxyglutamate modification is found at Glu271. The VWFA domain occupies 297-457 (PKNILFVIDV…YDFLKRLSND (161 aa)). Residue Asn434 is glycosylated (N-linked (GlcNAc...) asparagine). Phosphoserine is present on Ser455. At Asp691 the chain carries Aspartate 1-(chondroitin 4-sulfate)-ester. A propeptide spanning residues 692–935 (PHFIIYLPRS…PLLYSFLKRP (244 aa)) is cleaved from the precursor. Position 875 is a phosphoserine (Ser875).

It belongs to the ITIH family. As to quaternary structure, I-alpha-I plasma protease inhibitors are assembled from one or two heavy chains (HC) and one light chain, bikunin. Inter-alpha-inhibitor (I-alpha-I) is composed of ITIH1/HC1, ITIH2/HC2 and bikunin. Post-translationally, heavy chains are linked to bikunin via chondroitin 4-sulfate esterified to the alpha-carboxyl of the C-terminal aspartate after propeptide cleavage. In terms of processing, phosphorylated by FAM20C in the extracellular medium.

Its subcellular location is the secreted. Functionally, may act as a carrier of hyaluronan in serum or as a binding protein between hyaluronan and other matrix protein, including those on cell surfaces in tissues to regulate the localization, synthesis and degradation of hyaluronan which are essential to cells undergoing biological processes. The protein is Inter-alpha-trypsin inhibitor heavy chain H2 (ITIH2) of Sus scrofa (Pig).